A 555-amino-acid chain; its full sequence is Small ribosomal subunit protein uS3m (555 aa).

The interval 1–20 is disordered; sequence MARKGNPISVRLGKNRSSDS.

The protein belongs to the universal ribosomal protein uS3 family.

The protein resides in the mitochondrion. The chain is Small ribosomal subunit protein uS3m (RPS3) from Brassica napus (Rape).